A 231-amino-acid polypeptide reads, in one-letter code: 5'-methylthioadenosine/S-adenosylhomocysteine nucleosidase (231 aa).

Glutamate 12 (proton acceptor) is an active-site residue. Residues glycine 78, valine 153, and 174–175 (ME) contribute to the substrate site. Aspartate 198 serves as the catalytic Proton donor.

This sequence belongs to the PNP/UDP phosphorylase family. MtnN subfamily.

It carries out the reaction S-adenosyl-L-homocysteine + H2O = S-(5-deoxy-D-ribos-5-yl)-L-homocysteine + adenine. The enzyme catalyses S-methyl-5'-thioadenosine + H2O = 5-(methylsulfanyl)-D-ribose + adenine. The catalysed reaction is 5'-deoxyadenosine + H2O = 5-deoxy-D-ribose + adenine. It participates in amino-acid biosynthesis; L-methionine biosynthesis via salvage pathway; S-methyl-5-thio-alpha-D-ribose 1-phosphate from S-methyl-5'-thioadenosine (hydrolase route): step 1/2. Functionally, catalyzes the irreversible cleavage of the glycosidic bond in both 5'-methylthioadenosine (MTA) and S-adenosylhomocysteine (SAH/AdoHcy) to adenine and the corresponding thioribose, 5'-methylthioribose and S-ribosylhomocysteine, respectively. Also cleaves 5'-deoxyadenosine, a toxic by-product of radical S-adenosylmethionine (SAM) enzymes, into 5-deoxyribose and adenine. The polypeptide is 5'-methylthioadenosine/S-adenosylhomocysteine nucleosidase (Vibrio atlanticus (strain LGP32) (Vibrio splendidus (strain Mel32))).